The sequence spans 58 residues: SPbeta prophage-derived uncharacterized protein YotN (58 aa).

This is SPbeta prophage-derived uncharacterized protein YotN (yotN) from Bacillus subtilis (strain 168).